A 258-amino-acid polypeptide reads, in one-letter code: D-beta-hydroxybutyrate dehydrogenase (258 aa).

Residue L8–I32 participates in NAD(+) binding. Substrate is bound at residue S140. Catalysis depends on Y153, which acts as the Proton acceptor.

Belongs to the short-chain dehydrogenases/reductases (SDR) family.

The catalysed reaction is (R)-3-hydroxybutanoate + NAD(+) = acetoacetate + NADH + H(+). The protein is D-beta-hydroxybutyrate dehydrogenase (hbdH1) of Cupriavidus necator (strain ATCC 17699 / DSM 428 / KCTC 22496 / NCIMB 10442 / H16 / Stanier 337) (Ralstonia eutropha).